The chain runs to 212 residues: ATP phosphoribosyltransferase (212 aa).

The protein belongs to the ATP phosphoribosyltransferase family. Short subfamily. As to quaternary structure, heteromultimer composed of HisG and HisZ subunits.

The protein localises to the cytoplasm. The catalysed reaction is 1-(5-phospho-beta-D-ribosyl)-ATP + diphosphate = 5-phospho-alpha-D-ribose 1-diphosphate + ATP. Its pathway is amino-acid biosynthesis; L-histidine biosynthesis; L-histidine from 5-phospho-alpha-D-ribose 1-diphosphate: step 1/9. Catalyzes the condensation of ATP and 5-phosphoribose 1-diphosphate to form N'-(5'-phosphoribosyl)-ATP (PR-ATP). Has a crucial role in the pathway because the rate of histidine biosynthesis seems to be controlled primarily by regulation of HisG enzymatic activity. The protein is ATP phosphoribosyltransferase of Prochlorococcus marinus (strain MIT 9515).